The primary structure comprises 180 residues: Inner membrane-spanning protein YciB (180 aa).

Transmembrane regions (helical) follow at residues 4–24, 25–45, 49–69, 76–96, 118–138, and 150–170; these read FLSEIGPVIAFFAGFFYGGGI, QHATLYMLITSVICITLCYVI, VSKLSIISTTVLLVSGSITLI, IKIKPTILYVIFGIIFLMSGI, ITLSYRTAAFFFFMAVVNEVV, and FKVFGVIPITFIFILLQLPLL.

This sequence belongs to the YciB family.

Its subcellular location is the cell inner membrane. Its function is as follows. Plays a role in cell envelope biogenesis, maintenance of cell envelope integrity and membrane homeostasis. The sequence is that of Inner membrane-spanning protein YciB from Rickettsia rickettsii (strain Iowa).